The chain runs to 248 residues: Triosephosphate isomerase (248 aa).

9–11 serves as a coordination point for substrate; the sequence is NWK. The active-site Electrophile is the His-94. Glu-166 serves as the catalytic Proton acceptor. Residues Gly-172, Ser-212, and 233–234 contribute to the substrate site; that span reads GG.

The protein belongs to the triosephosphate isomerase family. Homodimer.

It is found in the cytoplasm. The enzyme catalyses D-glyceraldehyde 3-phosphate = dihydroxyacetone phosphate. It participates in carbohydrate biosynthesis; gluconeogenesis. Its pathway is carbohydrate degradation; glycolysis; D-glyceraldehyde 3-phosphate from glycerone phosphate: step 1/1. Involved in the gluconeogenesis. Catalyzes stereospecifically the conversion of dihydroxyacetone phosphate (DHAP) to D-glyceraldehyde-3-phosphate (G3P). The chain is Triosephosphate isomerase from Thermoanaerobacter sp. (strain X514).